The primary structure comprises 145 residues: D-aminoacyl-tRNA deacylase (145 aa).

Positions 137 to 138 (GP) match the Gly-cisPro motif, important for rejection of L-amino acids motif.

It belongs to the DTD family. Homodimer.

It localises to the cytoplasm. The catalysed reaction is glycyl-tRNA(Ala) + H2O = tRNA(Ala) + glycine + H(+). It carries out the reaction a D-aminoacyl-tRNA + H2O = a tRNA + a D-alpha-amino acid + H(+). Its function is as follows. An aminoacyl-tRNA editing enzyme that deacylates mischarged D-aminoacyl-tRNAs. Also deacylates mischarged glycyl-tRNA(Ala), protecting cells against glycine mischarging by AlaRS. Acts via tRNA-based rather than protein-based catalysis; rejects L-amino acids rather than detecting D-amino acids in the active site. By recycling D-aminoacyl-tRNA to D-amino acids and free tRNA molecules, this enzyme counteracts the toxicity associated with the formation of D-aminoacyl-tRNA entities in vivo and helps enforce protein L-homochirality. This Sodalis glossinidius (strain morsitans) protein is D-aminoacyl-tRNA deacylase.